The sequence spans 329 residues: Protein-arginine N-acetylglucosaminyltransferase NleB (329 aa).

An N-beta-linked (GlcNAc) arginine; by autocatalysis glycan is attached at R13. 48-50 contributes to the UDP-N-acetyl-alpha-D-glucosamine binding site; sequence QWF. A glycan (N-beta-linked (GlcNAc) arginine; by autocatalysis) is linked at R53. Y72 contacts UDP-N-acetyl-alpha-D-glucosamine. An N-beta-linked (GlcNAc) arginine; by autocatalysis glycan is attached at R159. Residue 219 to 222 coordinates UDP-N-acetyl-alpha-D-glucosamine; that stretch reads YLDA. The DXD motif signature appears at 221–223; the sequence is DAD. D223 provides a ligand contact to Mn(2+). The active-site Proton acceptor is E253. Residue R293 is glycosylated (N-beta-linked (GlcNAc) arginine; by autocatalysis). N320 and S322 together coordinate Mn(2+). UDP-N-acetyl-alpha-D-glucosamine is bound by residues S322 and 327-329; that span reads SSW.

Belongs to the glycosyltransferase NleB family. Requires Mn(2+) as cofactor. Auto-glycosylated: arginine GlcNAcylation is required for activity toward death domain-containing host target proteins.

Its subcellular location is the secreted. The protein localises to the host cell. The enzyme catalyses L-arginyl-[protein] + UDP-N-acetyl-alpha-D-glucosamine = N(omega)-(N-acetyl-beta-D-glucosaminyl)-L-arginyl-[protein] + UDP + H(+). Its function is as follows. Protein-arginine N-acetylglucosaminyltransferase effector that disrupts TNF signaling in infected cells, including NF-kappa-B signaling, apoptosis and necroptosis. Acts by catalyzing the transfer of a single N-acetylglucosamine (GlcNAc) to a conserved arginine residue in the death domain of host proteins FADD, TNFRSF1A and RIPK1: arginine GlcNAcylation prevents homotypic/heterotypic death domain interactions and assembly of the oligomeric TNF-alpha receptor complex, thereby disrupting TNF signaling. Has preference for host FADD as substrate compared to TNFRSF1A and RIPK1. Also acts on host proteins without a death domain: catalyzes GlcNAcylation of host GAPDH protein, thereby preventing GAPDH interaction with TRAF2 and TRAF3, leading to inhibit NF-kappa-B signaling and type I interferon production, respectively. Also displays intra-bacterial activity by mediating GlcNAcylation of glutathione synthetase GshB. Catalyzes auto-GlcNAcylation, which is required for activity toward death domain-containing host target proteins. The chain is Protein-arginine N-acetylglucosaminyltransferase NleB from Citrobacter rodentium.